A 285-amino-acid chain; its full sequence is Anamorsin homolog 1 (285 aa).

Residues 1-150 (MEATVLLVTD…QKPTWETGSS (150 aa)) are N-terminal SAM-like domain. Positions 150–195 (SFSLKKKSVQKQESLPKPGALSVKPEMNVDLEDLIDEESLLSEEDL) are linker. Residues Cys206, Cys215, Cys218, and Cys220 each coordinate [2Fe-2S] cluster. The segment at 206-220 (CEVSTKRKACKNCTC) is fe-S binding site A. 4 residues coordinate [4Fe-4S] cluster: Cys246, Cys249, Cys257, and Cys260. 2 short sequence motifs (cx2C motif) span residues 246–249 (CGNC) and 257–260 (CSSC). Residues 246–260 (CGNCGLGDAFRCSSC) are fe-S binding site B.

Belongs to the anamorsin family. Monomer. [2Fe-2S] cluster is required as a cofactor. Requires [4Fe-4S] cluster as cofactor.

The protein resides in the cytoplasm. It is found in the mitochondrion intermembrane space. Component of the cytosolic iron-sulfur (Fe-S) protein assembly (CIA) machinery. Required for the maturation of extramitochondrial Fe-S proteins. Part of an electron transfer chain functioning in an early step of cytosolic Fe-S biogenesis, facilitating the de novo assembly of a [4Fe-4S] cluster on the cytosolic Fe-S scaffold complex. Electrons are transferred from NADPH via a FAD- and FMN-containing diflavin oxidoreductase. Together with the diflavin oxidoreductase, also required for the assembly of the diferric tyrosyl radical cofactor of ribonucleotide reductase (RNR), probably by providing electrons for reduction during radical cofactor maturation in the catalytic small subunit. The polypeptide is Anamorsin homolog 1 (Picea sitchensis (Sitka spruce)).